The chain runs to 438 residues: Aspartate--tRNA(Asp/Asn) ligase (438 aa).

E176 contributes to the L-aspartate binding site. The segment at 198–201 (QLYK) is aspartate. R220 serves as a coordination point for L-aspartate. ATP-binding positions include 220-222 (RAE), 228-230 (RHL), and E361. Residues E361 and S364 each coordinate Mg(2+). Residues S364 and R368 each contribute to the L-aspartate site. Residue 409–412 (GADR) coordinates ATP.

The protein belongs to the class-II aminoacyl-tRNA synthetase family. Type 2 subfamily. In terms of assembly, homodimer. It depends on Mg(2+) as a cofactor.

The protein resides in the cytoplasm. It carries out the reaction tRNA(Asx) + L-aspartate + ATP = L-aspartyl-tRNA(Asx) + AMP + diphosphate. Functionally, aspartyl-tRNA synthetase with relaxed tRNA specificity since it is able to aspartylate not only its cognate tRNA(Asp) but also tRNA(Asn). Reaction proceeds in two steps: L-aspartate is first activated by ATP to form Asp-AMP and then transferred to the acceptor end of tRNA(Asp/Asn). The chain is Aspartate--tRNA(Asp/Asn) ligase from Methanococcus vannielii (strain ATCC 35089 / DSM 1224 / JCM 13029 / OCM 148 / SB).